Reading from the N-terminus, the 619-residue chain is Probable transporter mch1 (619 aa).

Transmembrane regions (helical) follow at residues V88–L108, A120–C140, P147–Y167, V184–V204, I219–A239, F261–I281, T377–N397, I428–A448, L480–P500, L515–W535, G541–I561, and F589–W609.

The protein belongs to the major facilitator superfamily.

The protein localises to the vacuole membrane. Functionally, probable transporter. This is Probable transporter mch1 (mch1) from Aspergillus fumigatus (strain ATCC MYA-4609 / CBS 101355 / FGSC A1100 / Af293) (Neosartorya fumigata).